We begin with the raw amino-acid sequence, 370 residues long: F-box protein At1g66490 (370 aa).

The 46-residue stretch at 1 to 46 (MRTISDLPVALVEEILSRVPLTSLSAVRSTCKTWNALSKTQIFGKT) folds into the F-box domain.

The chain is F-box protein At1g66490 from Arabidopsis thaliana (Mouse-ear cress).